The chain runs to 321 residues: Serine/threonine-protein phosphatase 4 catalytic subunit 2 (321 aa).

Mn(2+) contacts are provided by D64, H66, D92, and N124. The Proton donor role is filled by H125. Positions 174 and 249 each coordinate Mn(2+).

This sequence belongs to the PPP phosphatase family. PP-4 (PP-X) subfamily. In terms of assembly, serine/threonine-protein phosphatase 4 (PP4) occurs in different assemblies of the catalytic and one or more regulatory subunits. It depends on Mn(2+) as a cofactor.

It catalyses the reaction O-phospho-L-seryl-[protein] + H2O = L-seryl-[protein] + phosphate. It carries out the reaction O-phospho-L-threonyl-[protein] + H2O = L-threonyl-[protein] + phosphate. In terms of biological role, protein phosphatase which seems to be involved in larval development but not essential for embryogenesis. In Caenorhabditis elegans, this protein is Serine/threonine-protein phosphatase 4 catalytic subunit 2.